The sequence spans 109 residues: MQQLEFYPIAFLILAVMLEIVANILLKMSDGFRRKWLGILSLLSVLGAFSALAQAVKGIELSVAYALWGGFGIAATVAAGWILFNQRLNYKGWIGLILLLAGMVMIKLS.

A run of 4 helical transmembrane segments spans residues 6 to 26, 36 to 56, 64 to 84, and 88 to 108; these read FYPI…NILL, WLGI…AQAV, AYAL…WILF, and LNYK…MIKL.

The protein belongs to the drug/metabolite transporter (DMT) superfamily. Small multidrug resistance (SMR) (TC 2.A.7.1) family. MdtI subfamily. Forms a complex with MdtJ.

It is found in the cell inner membrane. Catalyzes the excretion of spermidine. This chain is Spermidine export protein MdtI, found in Yersinia pseudotuberculosis serotype O:1b (strain IP 31758).